A 643-amino-acid polypeptide reads, in one-letter code: Beta-1,3-galactosyltransferase GALT1 (643 aa).

The Cytoplasmic segment spans residues 1 to 6 (MKRFYG). A helical; Signal-anchor for type II membrane protein membrane pass occupies residues 7–23 (GLLVVSMCMFLTVYRYV). The Lumenal segment spans residues 24-643 (DLNTPVEKPY…TKRSLCCREW (620 aa)). 7 N-linked (GlcNAc...) asparagine glycosylation sites follow: Asn45, Asn87, Asn144, Asn162, Asn277, Asn287, and Asn508. In terms of domain architecture, Galectin spans 171–364 (LKLQIPCGLT…DFRLISILAS (194 aa)).

The protein belongs to the glycosyltransferase 31 family. In terms of assembly, interacts with GMII. Requires Mn(2+) as cofactor. In terms of tissue distribution, expressed in stems and siliques.

It localises to the golgi apparatus membrane. It participates in protein modification; protein glycosylation. In terms of biological role, beta-1,3-galactosyltransferase that transfers galactose from UDP-galactose to substrates with a terminal beta-N-acetylglucosamine (beta-GlcNAc) residue. Involved in the biosynthesis of N-glycans containing Lewis a structures (with the combination of FUT13). This Arabidopsis thaliana (Mouse-ear cress) protein is Beta-1,3-galactosyltransferase GALT1.